The chain runs to 631 residues: Acurin A biosynthesis cluster transcription regulator (631 aa).

Residues 1–11 show a composition bias toward polar residues; the sequence is MSPNMSLTASH. A disordered region spans residues 1 to 28; that stretch reads MSPNMSLTASHPQQPQPTPQSKAQLTRQ. Residues 30 to 62 constitute a DNA-binding region (zn(2)-C6 fungal-type); it reads CNRCHASKLKCLRPPGVTTSKSCIRCIKADTEC. Disordered regions lie at residues 64 to 141, 489 to 522, and 536 to 573; these read YDPP…PDNR, CSSSASTSSTASTTSCSTRAPPSSATGGAHHPAT, and HSSSDHLFSQPEGRGYAPYNHAFHPPPPSRHTHNYPTP. A compositionally biased stretch (basic and acidic residues) spans 88–99; sequence IEAREPEVTDPR. A compositionally biased stretch (polar residues) spans 119–128; that stretch reads NGSLAPSSAA.

The protein localises to the nucleus. Functionally, transcription factor that positively regulates the expression of the cluster that mediates the biosynthesis of acurin A, a highly reduced polyketide coupled to a serine via a peptide bond. The sequence is that of Acurin A biosynthesis cluster transcription regulator from Aspergillus aculeatus (strain ATCC 16872 / CBS 172.66 / WB 5094).